The following is a 333-amino-acid chain: Probable malate dehydrogenase 3 (333 aa).

12-18 provides a ligand contact to NAD(+); sequence GAAGQIA. The substrate site is built by R93 and R99. NAD(+) contacts are provided by residues N106, Q113, and 130–132; that span reads VGN. Positions 132 and 163 each coordinate substrate. H188 acts as the Proton acceptor in catalysis.

This sequence belongs to the LDH/MDH superfamily. MDH type 2 family. As to quaternary structure, homodimer.

The enzyme catalyses (S)-malate + NAD(+) = oxaloacetate + NADH + H(+). In terms of biological role, catalyzes the reversible oxidation of malate to oxaloacetate. The polypeptide is Probable malate dehydrogenase 3 (mdhC) (Dictyostelium discoideum (Social amoeba)).